The following is a 330-amino-acid chain: Aspartate--ammonia ligase (330 aa).

This sequence belongs to the class-II aminoacyl-tRNA synthetase family. AsnA subfamily.

It localises to the cytoplasm. The catalysed reaction is L-aspartate + NH4(+) + ATP = L-asparagine + AMP + diphosphate + H(+). Its pathway is amino-acid biosynthesis; L-asparagine biosynthesis; L-asparagine from L-aspartate (ammonia route): step 1/1. The protein is Aspartate--ammonia ligase of Enterobacter sp. (strain 638).